The following is a 248-amino-acid chain: Probable septum site-determining protein MinC (248 aa).

The disordered stretch occupies residues 115-144; the sequence is PTAVSPPPPPPPPARAEPAPPAARPAPGRM. The span at 118 to 138 shows a compositional bias: pro residues; sequence VSPPPPPPPPARAEPAPPAAR.

It belongs to the MinC family. In terms of assembly, interacts with MinD and FtsZ.

In terms of biological role, cell division inhibitor that blocks the formation of polar Z ring septums. Rapidly oscillates between the poles of the cell to destabilize FtsZ filaments that have formed before they mature into polar Z rings. Prevents FtsZ polymerization. This Xanthomonas euvesicatoria pv. vesicatoria (strain 85-10) (Xanthomonas campestris pv. vesicatoria) protein is Probable septum site-determining protein MinC.